A 388-amino-acid polypeptide reads, in one-letter code: 4-hydroxy-3-methylbut-2-en-1-yl diphosphate synthase (flavodoxin) (388 aa).

The disordered stretch occupies residues Met1–Thr22. 4 residues coordinate [4Fe-4S] cluster: Cys281, Cys284, Cys316, and Glu323.

The protein belongs to the IspG family. It depends on [4Fe-4S] cluster as a cofactor.

It carries out the reaction (2E)-4-hydroxy-3-methylbut-2-enyl diphosphate + oxidized [flavodoxin] + H2O + 2 H(+) = 2-C-methyl-D-erythritol 2,4-cyclic diphosphate + reduced [flavodoxin]. The protein operates within isoprenoid biosynthesis; isopentenyl diphosphate biosynthesis via DXP pathway; isopentenyl diphosphate from 1-deoxy-D-xylulose 5-phosphate: step 5/6. Its function is as follows. Converts 2C-methyl-D-erythritol 2,4-cyclodiphosphate (ME-2,4cPP) into 1-hydroxy-2-methyl-2-(E)-butenyl 4-diphosphate. In Kocuria rhizophila (strain ATCC 9341 / DSM 348 / NBRC 103217 / DC2201), this protein is 4-hydroxy-3-methylbut-2-en-1-yl diphosphate synthase (flavodoxin).